Reading from the N-terminus, the 312-residue chain is Serine/threonine-protein phosphatase CPPED1 (312 aa).

Serine 2 is subject to Phosphoserine. Residues 47–250 (KAWSTGNCDA…AVFSGHYHRN (204 aa)) are catalytic. Residues aspartate 90, asparagine 127, and histidine 246 each coordinate a divalent metal cation. Serine 293 carries the phosphoserine modification.

It belongs to the metallophosphoesterase superfamily. CPPED1 family. The cofactor is a divalent metal cation.

The protein resides in the cytoplasm. It carries out the reaction O-phospho-L-seryl-[protein] + H2O = L-seryl-[protein] + phosphate. The enzyme catalyses O-phospho-L-threonyl-[protein] + H2O = L-threonyl-[protein] + phosphate. Protein phosphatase that dephosphorylates AKT family kinase specifically at 'Ser-473', blocking cell cycle progression and promoting cell apoptosis. May play an inhibitory role in glucose uptake by adipocytes. This Mus musculus (Mouse) protein is Serine/threonine-protein phosphatase CPPED1 (Cpped1).